Here is a 283-residue protein sequence, read N- to C-terminus: Thymidylate synthase (283 aa).

A dUMP-binding site is contributed by arginine 22. The active-site Nucleophile is cysteine 160. DUMP-binding positions include 180–183 (RSCD), asparagine 191, and 221–223 (HIY). Aspartate 183 serves as a coordination point for (6R)-5,10-methylene-5,6,7,8-tetrahydrofolate. Residue serine 282 participates in (6R)-5,10-methylene-5,6,7,8-tetrahydrofolate binding.

The protein belongs to the thymidylate synthase family. Bacterial-type ThyA subfamily. Homodimer.

The protein resides in the cytoplasm. It carries out the reaction dUMP + (6R)-5,10-methylene-5,6,7,8-tetrahydrofolate = 7,8-dihydrofolate + dTMP. Its pathway is pyrimidine metabolism; dTTP biosynthesis. Catalyzes the reductive methylation of 2'-deoxyuridine-5'-monophosphate (dUMP) to 2'-deoxythymidine-5'-monophosphate (dTMP) while utilizing 5,10-methylenetetrahydrofolate (mTHF) as the methyl donor and reductant in the reaction, yielding dihydrofolate (DHF) as a by-product. This enzymatic reaction provides an intracellular de novo source of dTMP, an essential precursor for DNA biosynthesis. The protein is Thymidylate synthase of Haemophilus influenzae (strain PittEE).